Here is a 307-residue protein sequence, read N- to C-terminus: Mitochondrial thiamine pyrophosphate carrier 1 (307 aa).

Solcar repeat units follow at residues 13–95 (VSTT…IGSF), 105–190 (SPQL…IKIF), and 203–305 (PFTL…FMNK). Helical transmembrane passes span 19 to 36 (LVAGSLSGLFARTCIAPL), 76 to 96 (IMYIIYGGAQFGSYTYIGSFL), 108 to 126 (LYSCLVGSLAGMTSSLASY), 160 to 184 (MGFFSGCGSSMINIGLNTAIMFGVY), 210 to 226 (LAGPISGFTSKLATFPL), and 280 to 297 (GVTMSLIKSVPSTAISLW).

Belongs to the mitochondrial carrier (TC 2.A.29) family.

The protein resides in the mitochondrion inner membrane. In terms of biological role, mitochondrial transporter that mediates uptake of thiamine pyrophosphate (ThPP) into mitochondria. The protein is Mitochondrial thiamine pyrophosphate carrier 1 (TPC1) of Candida glabrata (strain ATCC 2001 / BCRC 20586 / JCM 3761 / NBRC 0622 / NRRL Y-65 / CBS 138) (Yeast).